A 145-amino-acid chain; its full sequence is MEQHYHQQNQLRQLKQQQLKELLQQQSKDKEEDEQKHDDYRSPTKTTTTTATSTSAATIQSPIKSNEEDDEIDNSQHNNDTLQISEPEGESEIEEIWEHAFDPLPTSVSKNSAENVTNLGGINARVFSLSKPIYHDPNKLDLLLI.

Positions 1–41 (MEQHYHQQNQLRQLKQQQLKELLQQQSKDKEEDEQKHDDYR) form a coiled coil. The interval 1-91 (MEQHYHQQNQ…LQISEPEGES (91 aa)) is disordered. Residues 7-26 (QQNQLRQLKQQQLKELLQQQ) show a composition bias toward low complexity. The span at 27–42 (SKDKEEDEQKHDDYRS) shows a compositional bias: basic and acidic residues. Positions 43-58 (PTKTTTTTATSTSAAT) are enriched in low complexity.

This is an uncharacterized protein from Dictyostelium discoideum (Social amoeba).